Here is a 64-residue protein sequence, read N- to C-terminus: Large ribosomal subunit protein bL35 (64 aa).

Disordered regions lie at residues 1–22 (MPKAKTHSGASKRFRRTGTGKI) and 34–64 (EHKPTTRTRRLEGRTTVSANDTKRVNSLLNG). Residues 34–46 (EHKPTTRTRRLEG) are compositionally biased toward basic and acidic residues. Residues 50 to 64 (VSANDTKRVNSLLNG) show a composition bias toward polar residues.

Belongs to the bacterial ribosomal protein bL35 family.

This chain is Large ribosomal subunit protein bL35, found in Mycolicibacterium paratuberculosis (strain ATCC BAA-968 / K-10) (Mycobacterium paratuberculosis).